A 640-amino-acid chain; its full sequence is Threonine--tRNA ligase (640 aa).

A TGS domain is found at 1–61 (MLVVTLPDGS…DKDSQLAIIT (61 aa)). The interval 242–533 (DHRRLGKQLD…LIENHTGNMP (292 aa)) is catalytic. Zn(2+)-binding residues include C333, H384, and H510.

The protein belongs to the class-II aminoacyl-tRNA synthetase family. In terms of assembly, homodimer. The cofactor is Zn(2+).

The protein localises to the cytoplasm. It catalyses the reaction tRNA(Thr) + L-threonine + ATP = L-threonyl-tRNA(Thr) + AMP + diphosphate + H(+). Its function is as follows. Catalyzes the attachment of threonine to tRNA(Thr) in a two-step reaction: L-threonine is first activated by ATP to form Thr-AMP and then transferred to the acceptor end of tRNA(Thr). Also edits incorrectly charged L-seryl-tRNA(Thr). In Polynucleobacter necessarius subsp. necessarius (strain STIR1), this protein is Threonine--tRNA ligase.